A 513-amino-acid chain; its full sequence is Meiotic sister chromatid recombination protein 1 (513 aa).

A Phosphothreonine modification is found at threonine 237. Phosphoserine is present on serine 243.

This is Meiotic sister chromatid recombination protein 1 (MSC1) from Saccharomyces cerevisiae (strain ATCC 204508 / S288c) (Baker's yeast).